A 259-amino-acid chain; its full sequence is UPF0246 protein Pfl01_0961 (259 aa).

Belongs to the UPF0246 family.

This chain is UPF0246 protein Pfl01_0961, found in Pseudomonas fluorescens (strain Pf0-1).